The primary structure comprises 1482 residues: Cystic fibrosis transmembrane conductance regulator (1482 aa).

Topologically, residues 1–77 are cytoplasmic; it reads MQKSPLERAS…KLINALRRCF (77 aa). A helical transmembrane segment spans residues 78–98; that stretch reads FWRFVFYGILLYLGEVTKAVQ. Residues 81 to 365 form the ABC transmembrane type-1 1 domain; the sequence is FVFYGILLYL…WAVQTWYDSL (285 aa). Residues 99-122 lie on the Extracellular side of the membrane; sequence PLLLGRIIASYDPDNKVERSIAIY. The chain crosses the membrane as a helical span at residues 123-146; that stretch reads LAIGLCLLFIVRTLLLHPAIFGLH. Residues 147–195 lie on the Cytoplasmic side of the membrane; the sequence is HMGMQMRIAMFSLIYKKTLKLSSRVLDKISIGQLVSLLSNNLNKFDEGL. The chain crosses the membrane as a helical span at residues 196-216; sequence ALAHFVWIAPLQVTLLMGLIW. The Extracellular portion of the chain corresponds to 217 to 222; it reads DLLQAS. Residues 223-243 traverse the membrane as a helical segment; sequence AFCGLAFLIIVALGQAGLGRM. At 244–298 the chain is on the cytoplasmic side; that stretch reads MMKYRDKRAGKINERLVITSEMIENIQSVKAYCWEEAMEKMIENLRQIELRLTRK. A helical transmembrane segment spans residues 299-319; it reads AAYVRYFNSAAFFFSGFFVVF. At 320–339 the chain is on the extracellular side; the sequence is LSVLPYAMLKGIILRKIFTT. Residues 340 to 358 traverse the membrane as a helical segment; that stretch reads ISFCIVLRMAVTRQFPWAV. Residues 359–858 are Cytoplasmic-facing; sequence QTWYDSLGAI…YLRYVTVHKS (500 aa). Residues W401, S434, 458–465, and Q493 contribute to the ATP site; that span reads GSTGAGKT. The 224-residue stretch at 423 to 646 folds into the ABC transporter 1 domain; the sequence is NGDNSLFFSN…RPDFSSELMG (224 aa). Residue C524 is the site of S-palmitoyl cysteine attachment. Phosphoserine is present on residues S549 and S660. Residues 654–831 are disordered R region; the sequence is SAERRNSILT…EEINEEDLKE (178 aa). S670 is modified (phosphoserine; by PKA). S685 is modified (phosphoserine). K687 participates in a covalent cross-link: Glycyl lysine isopeptide (Lys-Gly) (interchain with G-Cter in ubiquitin). Phosphoserine occurs at positions 699 and 711. Position 716 is a phosphothreonine (T716). Phosphoserine occurs at positions 736, 767, 790, 795, and 813. Residues 859-879 traverse the membrane as a helical segment; sequence LIFVLIWCLVVFLAEVAVSLV. The ABC transmembrane type-1 2 domain occupies 859–1156; that stretch reads LIFVLIWCLV…AVNSSIDVDS (298 aa). Residues 880-919 are Extracellular-facing; it reads VLYLLRTSSLQDKGNNTTVNANSSYGVIVTNTSSYYLLYI. N-linked (GlcNAc...) asparagine glycans are attached at residues N894, N895, N901, and N910. A discontinuously helical transmembrane segment spans residues 920–940; the sequence is YVGIADSLFALAIFRGLPLVH. The Cytoplasmic segment spans residues 941–991; it reads TLIKVSKTLHHKMLRSILQAPMSTFNTLKAGRILNRFSKDIAILDDLLPLT. Residues 992–1012 form a helical membrane-spanning segment; the sequence is MFDFIQLLLIVIGAVVVVSVL. At 1013–1014 the chain is on the extracellular side; it reads QP. Residues 1015–1035 form a helical membrane-spanning segment; sequence YIFLATVPVIAAFIILRAYFL. Residues 1036-1096 lie on the Cytoplasmic side of the membrane; the sequence is HTSQQLKQLE…TANWFLYLST (61 aa). Residues 1097–1117 traverse the membrane as a helical segment; the sequence is LRWFQMRIEIIFVIFFIAVTF. At 1118–1131 the chain is on the extracellular side; sequence VSILTTGEGEGTIG. The helical transmembrane segment at 1132–1152 threads the bilayer; the sequence is IILTLAMNIMNTLQWAVNSSI. The Cytoplasmic portion of the chain corresponds to 1153-1482; the sequence is DVDSLMRSVS…TEEEVQETRL (330 aa). Positions 1212-1445 constitute an ABC transporter 2 domain; it reads MTVKDLTAKY…KSLFRQAISP (234 aa). Residues Y1221 and 1246-1253 contribute to the ATP site; that span reads GRTGSGKS. Positions 1388–1482 are interaction with GORASP2; that stretch reads RTLKQAFADC…TEEEVQETRL (95 aa). Residue C1397 is the site of S-palmitoyl cysteine attachment. Positions 1454 to 1463 are enriched in basic residues; that stretch reads HRNSSRHRSR. Residues 1454–1482 are disordered; it reads HRNSSRHRSRSQIAALKEETEEEVQETRL. S1458 carries the post-translational modification Phosphoserine. A compositionally biased stretch (acidic residues) spans 1472-1482; it reads ETEEEVQETRL. The short motif at 1480–1482 is the PDZ-binding element; that stretch reads TRL.

It belongs to the ABC transporter superfamily. ABCC family. CFTR transporter (TC 3.A.1.202) subfamily. Monomer; does not require oligomerization for channel activity. May form oligomers in the membrane. Interacts with SLC26A3, SLC26A6 and NHERF1. Interacts with SHANK2. Interacts with MYO6. Interacts (via C-terminus) with GOPC (via PDZ domain); this promotes CFTR internalization and thereby decreases channel activity. Interacts with SLC4A7 through NHERF1. Found in a complex with MYO5B and RAB11A. Interacts with ANO1. Interacts with SLC26A8. Interacts with AHCYL1; the interaction increases CFTR activity. Interacts with CSE1L. The core-glycosylated form interacts with GORASP2 (via PDZ GRASP-type 1 domain) in respone to ER stress. Interacts with MARCHF2; the interaction leads to CFTR ubiqtuitination and degradation. Interacts with ADGRG2. N-glycosylated. Post-translationally, phosphorylated; cAMP treatment promotes phosphorylation and activates the channel. Dephosphorylation decreases the ATPase activity (in vitro). Phosphorylation at PKA sites activates the channel. Phosphorylation at PKC sites enhances the response to phosphorylation by PKA. Phosphorylated by AMPK; this inhibits channel activity. In terms of processing, ubiquitinated, leading to its degradation in the lysosome. Deubiquitination by USP10 in early endosomes enhances its endocytic recycling to the cell membrane. Ubiquitinated by RNF185 during ER stress. Ubiquitinated by MARCHF2.

It localises to the apical cell membrane. The protein localises to the early endosome membrane. Its subcellular location is the cell membrane. The protein resides in the recycling endosome membrane. It is found in the endoplasmic reticulum membrane. It localises to the nucleus. The enzyme catalyses ATP + H2O + closed Cl(-) channel = ADP + phosphate + open Cl(-) channel.. It catalyses the reaction chloride(in) = chloride(out). It carries out the reaction hydrogencarbonate(in) = hydrogencarbonate(out). The catalysed reaction is ATP + H2O = ADP + phosphate + H(+). Its function is as follows. Epithelial ion channel that plays an important role in the regulation of epithelial ion and water transport and fluid homeostasis. Mediates the transport of chloride ions across the cell membrane. Possesses an intrinsic ATPase activity and utilizes ATP to gate its channel; the passive flow of anions through the channel is gated by cycles of ATP binding and hydrolysis by the ATP-binding domains. The ion channel is also permeable to HCO(3)(-); selectivity depends on the extracellular chloride concentration. Exerts its function also by modulating the activity of other ion channels and transporters. Contributes to the regulation of the pH and the ion content of the epithelial fluid layer. Modulates the activity of the epithelial sodium channel (ENaC) complex, in part by regulating the cell surface expression of the ENaC complex. May regulate bicarbonate secretion and salvage in epithelial cells by regulating the transporter SLC4A7. Can inhibit the chloride channel activity of ANO1. Plays a role in the chloride and bicarbonate homeostasis during sperm epididymal maturation and capacitation. The polypeptide is Cystic fibrosis transmembrane conductance regulator (Loxodonta africana (African elephant)).